Here is a 540-residue protein sequence, read N- to C-terminus: Glucose-6-phosphate isomerase (540 aa).

Glutamate 350 serves as the catalytic Proton donor. Residues histidine 381 and lysine 503 contribute to the active site.

The protein belongs to the GPI family.

It is found in the cytoplasm. The catalysed reaction is alpha-D-glucose 6-phosphate = beta-D-fructose 6-phosphate. It participates in carbohydrate biosynthesis; gluconeogenesis. The protein operates within carbohydrate degradation; glycolysis; D-glyceraldehyde 3-phosphate and glycerone phosphate from D-glucose: step 2/4. Functionally, catalyzes the reversible isomerization of glucose-6-phosphate to fructose-6-phosphate. This chain is Glucose-6-phosphate isomerase, found in Burkholderia orbicola (strain AU 1054).